Consider the following 5801-residue polypeptide: uncharacterized protein (5801 aa).

7 disordered regions span residues 1114 to 1136, 1827 to 1846, 2040 to 2109, 3351 to 3392, 5134 to 5168, 5478 to 5573, and 5600 to 5638; these read DDDN…NKKI, KDRS…SINN, NNGE…SPLF, EKSN…NNSG, DNNN…SESD, ISDP…EDII, and HDKD…ETPG. 5 stretches are compositionally biased toward low complexity: residues 1118 to 1134, 1831 to 1846, 2048 to 2096, 3353 to 3392, and 5135 to 5153; these read NNSN…NNNK, SSSS…SINN, QQLQ…QQQQ, SNNN…NNSG, and NNNN…NNNN. Acidic residues predominate over residues 5496–5573; that stretch reads DNEEEEEDDD…EDEDEDEDII (78 aa). Over residues 5617–5629 the composition is skewed to basic and acidic residues; that stretch reads QQPEKPQQPEKPQ.

This is an uncharacterized protein from Dictyostelium discoideum (Social amoeba).